The following is a 1292-amino-acid chain: (E3-independent) E2 ubiquitin-conjugating enzyme (1292 aa).

The span at 1–37 (MADPAAPTPAAPAPAQAPAPAPEAVPAPAAAPVPAPA) shows a compositional bias: pro residues. 2 disordered regions span residues 1 to 56 (MADP…EAGS) and 85 to 114 (EDSDSEGEEEGRGSSGCSEAGGAGHEEGRA). The segment covering 38 to 56 (PASDSASGPSSDSGPEAGS) has biased composition (low complexity). Residues Ser50, Ser87, Ser89, Ser399, and Ser401 each carry the phosphoserine modification. 3 disordered regions span residues 401–459 (SPDT…AGEQ), 472–519 (RLHS…IPLS), and 714–746 (IEESDYDSVEGSTSGASSDEWEDDSDSWETDNG). Over residues 406 to 427 (CSRDHSMEDPDKKGESKTKSEA) the composition is skewed to basic and acidic residues. Ser441 carries the post-translational modification Phosphoserine. Over residues 478-490 (QDADDEAADDTDD) the composition is skewed to acidic residues. Residues Thr488 and Thr491 each carry the phosphothreonine modification. The segment covering 491–510 (TSSVTSSASSTTSSQSGSGT) has biased composition (low complexity). Positions 512 to 536 (RKKSIPLSIKNLKRKHKRKKNKITR) match the Nuclear localization signal motif. Ser515 bears the Phosphoserine mark. A compositionally biased stretch (acidic residues) spans 732–742 (DEWEDDSDSWE). Residues 812-882 (RELKEAIKIL…IVEEEKMEAV (71 aa)) are a coiled coil. A Phosphoserine modification is found at Ser836. Thr838 carries the post-translational modification Phosphothreonine. Position 839 is a phosphoserine (Ser839). A compositionally biased stretch (basic and acidic residues) spans 882 to 893 (VPDVERKEDKPE). The segment at 882–903 (VPDVERKEDKPEGQSPVKAEWP) is disordered. Ser896 is subject to Phosphoserine. The 161-residue stretch at 953–1113 (KFFSTVRKEM…ALIRVVQSMT (161 aa)) folds into the UBC core domain. The Glycyl thioester intermediate role is filled by Cys1040. The interval 1160–1248 (NGVPKASSSP…KSYRSFLPEK (89 aa)) is disordered.

This sequence belongs to the ubiquitin-conjugating enzyme family. In terms of assembly, interacts with CPNE1 (via VWFA domain) and CPNE4 (via VWFA domain). Interacts with UBR2. Phosphorylated. Phosphorylation affects subcellular location. Post-translationally, ubiquitinated: autoubiquitinates, possibly affecting its subcellular location. Predominantly expressed in skeletal muscle and heart.

The protein localises to the cytoplasm. It localises to the nucleus. It carries out the reaction S-ubiquitinyl-[E1 ubiquitin-activating enzyme]-L-cysteine + [acceptor protein]-L-lysine = [E1 ubiquitin-activating enzyme]-L-cysteine + N(6)-monoubiquitinyl-[acceptor protein]-L-lysine.. It participates in protein modification; protein ubiquitination. Its activity is regulated as follows. inhibited by phenylarsine oxide (PAO). Its function is as follows. E2/E3 hybrid ubiquitin-protein ligase that displays both E2 and E3 ligase activities and mediates monoubiquitination of target proteins. Negatively regulates TRAF6-mediated NF-kappa-B activation independently of its E2 activity. Acts as a positive regulator of BMP7 signaling by mediating monoubiquitination of SMAD6, thereby regulating adipogenesis. Mediates monoubiquitination at different sites of the nuclear localization signal (NLS) of BAP1, leading to cytoplasmic retention of BAP1. Also able to monoubiquitinate the NLS of other chromatin-associated proteins, such as INO80 and CXXC1, affecting their subcellular location. Acts as a regulator of retrograde transport by assisting the TRIM27:MAGEL2 E3 ubiquitin ligase complex to mediate 'Lys-63'-linked ubiquitination of WASHC1, leading to promote endosomal F-actin assembly. This is (E3-independent) E2 ubiquitin-conjugating enzyme (UBE2O) from Homo sapiens (Human).